Consider the following 530-residue polypeptide: MSDLDLSQYGITPDTTLRNADPARLYEEAIHYDPTAAIAHSGALTIRSGEKTGRSPADKRIVRHPNSEDDIWWGPINMEIDDHTFEINKERAQDYLNTRQRIYVMDGFAGWDPAHRLKVRIICSRPYHALFMHNMLIRPSQEELASFGEPDFVIYNAGEFPANRQTKHMSSKTSVDLSFENQEMVILGTEYAGEMKKGVFTVMHYLMPKKDVLSMHCSANEGDEGDVSLFFGLSGTGKTTLSADPNRKLIGDDEHCWSDDGVFNIEGGCYAKAVGLSEEEEPEIYNAIRYGTVLENMVYDEDTRAVDYDDTSITQNTRASYPLDYIDRAKIPGMGGHPDNIIFLTYDAFGVMPPVSKLTPEQAMYHFISGYTAKVAGTEVGVDEPQATFSACFGAAFLVWPPDKYAEMLAEKIRAHDAEAWLVNTGITGGPYGVGHRVPLEHTRAMIDAIHDGSLLDAPKKTEPVFGLDVPTECPNVPNDILMPRETWDDPQAYDEKAEHLVGLFHDHFEKYEDEAAPAIAEAGPQLQAA.

Residues Arg-54, Tyr-191, and Lys-197 each coordinate substrate. ATP contacts are provided by residues Lys-197, His-216, and 232–240 (GLSGTGKTT). Mn(2+) is bound by residues Lys-197 and His-216. Asp-253 serves as a coordination point for Mn(2+). Residues Glu-281, Arg-318, 437–438 (RV), and Thr-443 each bind ATP. Arg-318 serves as a coordination point for substrate.

This sequence belongs to the phosphoenolpyruvate carboxykinase (ATP) family. Requires Mn(2+) as cofactor.

The protein localises to the cytoplasm. It catalyses the reaction oxaloacetate + ATP = phosphoenolpyruvate + ADP + CO2. It participates in carbohydrate biosynthesis; gluconeogenesis. Functionally, involved in the gluconeogenesis. Catalyzes the conversion of oxaloacetate (OAA) to phosphoenolpyruvate (PEP) through direct phosphoryl transfer between the nucleoside triphosphate and OAA. In Salinibacter ruber (strain DSM 13855 / M31), this protein is Phosphoenolpyruvate carboxykinase (ATP) 2.